The following is a 444-amino-acid chain: Adenylosuccinate synthetase (444 aa).

GTP contacts are provided by residues 13–19 (GDEGKGK) and 41–43 (GHT). Asp-14 functions as the Proton acceptor in the catalytic mechanism. Mg(2+)-binding residues include Asp-14 and Gly-41. Residues 14–17 (DEGK), 39–42 (NAGH), Thr-129, Arg-143, Gln-224, Thr-239, and Arg-303 each bind IMP. His-42 serves as the catalytic Proton donor. Residue 299-305 (TTTGRRR) coordinates substrate. Residues Arg-305, 331–333 (KLD), and 413–415 (SLG) contribute to the GTP site.

It belongs to the adenylosuccinate synthetase family. In terms of assembly, homodimer. Requires Mg(2+) as cofactor.

It is found in the cytoplasm. The catalysed reaction is IMP + L-aspartate + GTP = N(6)-(1,2-dicarboxyethyl)-AMP + GDP + phosphate + 2 H(+). It functions in the pathway purine metabolism; AMP biosynthesis via de novo pathway; AMP from IMP: step 1/2. Functionally, plays an important role in the de novo pathway of purine nucleotide biosynthesis. Catalyzes the first committed step in the biosynthesis of AMP from IMP. The polypeptide is Adenylosuccinate synthetase (Synechocystis sp. (strain ATCC 27184 / PCC 6803 / Kazusa)).